A 467-amino-acid polypeptide reads, in one-letter code: GTPase Der (467 aa).

EngA-type G domains are found at residues 3-167 and 179-352; these read PTLV…PYEE and PVIA…AAAR. Residues 9–16, 56–60, 119–122, 185–192, 232–236, and 297–300 contribute to the GTP site; these read GRPNVGKS, DTGGF, NKTE, DTAGL, and NKWD. Residues 353-437 enclose the KH-like domain; it reads AHIPTPKLTR…PLRVEFRTGH (85 aa). A disordered region spans residues 434–467; sequence RTGHNPYAGKKTPLTEEEARRAHSRRRRNRKKYG. Residues 455–467 are compositionally biased toward basic residues; it reads AHSRRRRNRKKYG.

The protein belongs to the TRAFAC class TrmE-Era-EngA-EngB-Septin-like GTPase superfamily. EngA (Der) GTPase family. As to quaternary structure, associates with the 50S ribosomal subunit.

GTPase that plays an essential role in the late steps of ribosome biogenesis. The chain is GTPase Der from Nitrosomonas europaea (strain ATCC 19718 / CIP 103999 / KCTC 2705 / NBRC 14298).